A 393-amino-acid chain; its full sequence is NAD(P)H-quinone oxidoreductase subunit H, chloroplastic (393 aa).

The protein belongs to the complex I 49 kDa subunit family. As to quaternary structure, NDH is composed of at least 16 different subunits, 5 of which are encoded in the nucleus.

It is found in the plastid. The protein localises to the chloroplast thylakoid membrane. The catalysed reaction is a plastoquinone + NADH + (n+1) H(+)(in) = a plastoquinol + NAD(+) + n H(+)(out). It carries out the reaction a plastoquinone + NADPH + (n+1) H(+)(in) = a plastoquinol + NADP(+) + n H(+)(out). Functionally, NDH shuttles electrons from NAD(P)H:plastoquinone, via FMN and iron-sulfur (Fe-S) centers, to quinones in the photosynthetic chain and possibly in a chloroplast respiratory chain. The immediate electron acceptor for the enzyme in this species is believed to be plastoquinone. Couples the redox reaction to proton translocation, and thus conserves the redox energy in a proton gradient. The sequence is that of NAD(P)H-quinone oxidoreductase subunit H, chloroplastic from Lactuca sativa (Garden lettuce).